Reading from the N-terminus, the 67-residue chain is Beta-defensin 103A (67 aa).

Positions 1–22 (MRIHFLLFALLFLFLMPVPGNG) are cleaved as a signal peptide. 3 cysteine pairs are disulfide-bonded: cysteine 33–cysteine 62, cysteine 40–cysteine 55, and cysteine 45–cysteine 63.

Belongs to the beta-defensin family.

It is found in the secreted. Functionally, exhibits antimicrobial activity against Gram-positive and Gram-negative bacteria. The protein is Beta-defensin 103A (DEFB103A) of Equus caballus (Horse).